Reading from the N-terminus, the 834-residue chain is Semaphorin-4C (834 aa).

The N-terminal stretch at 1-20 (MAPHWAVWLLAAGLWGLGIG) is a signal peptide. Over 21 to 664 (AEMWWNLVPR…EARAPLENLG (644 aa)) the chain is Extracellular. One can recognise a Sema domain in the interval 30–497 (RKTVSSGELV…SRSQLVQLSL (468 aa)). Residues 46–489 (SQTGIQDFLT…SKKVLFAGSR (444 aa)) form a dominant negative effect on myogenic differentiation region. A disulfide bridge links Cys-99 with Cys-110. N-linked (GlcNAc...) asparagine glycosylation is found at Asn-106 and Asn-121. 3 cysteine pairs are disulfide-bonded: Cys-128-Cys-137, Cys-261-Cys-370, and Cys-285-Cys-330. 2 N-linked (GlcNAc...) asparagine glycosylation sites follow: Asn-310 and Asn-419. Residues 499–552 (DCTKYRFCVDCVLARDPYCAWNVNTSRCVATTSGRSGSFLVQHVANLDTSKMCN) enclose the PSI domain. Cystine bridges form between Cys-500-Cys-517 and Cys-509-Cys-526. N-linked (GlcNAc...) asparagine glycosylation is found at Asn-522 and Asn-565. Positions 557–645 (KKVRSIPKNI…RLAAESYLVA (89 aa)) constitute an Ig-like C2-type domain. A disulfide bond links Cys-578 and Cys-628. A helical membrane pass occupies residues 665 to 685 (LVWLAVVALGAVCLVLLLLVL). The Cytoplasmic portion of the chain corresponds to 686 to 834 (SLRRRLREEL…PDSNPEESSV (149 aa)). Ser-743 bears the Phosphoserine mark. The interval 749-834 (GHARCQPGGG…PDSNPEESSV (86 aa)) is disordered. The span at 757–773 (GGPPSPPPGIPGQPLPS) shows a compositional bias: pro residues. Positions 831–834 (ESSV) match the PDZ-binding motif.

This sequence belongs to the semaphorin family. In terms of assembly, interacts (via the PDZ-binding motif) with GIPC (via the PDZ domain). Interacts with NCDN. Interacts (via the PDZ-binding motif) with DLG4. Interacts with PLXNB2. In terms of tissue distribution, predominantly expressed in brain (at protein level).

Its subcellular location is the postsynaptic density membrane. The protein resides in the cytoplasmic vesicle. The protein localises to the secretory vesicle. It is found in the synaptic vesicle membrane. Functionally, cell surface receptor for PLXNB2 that plays an important role in cell-cell signaling. PLXNB2 binding promotes downstream activation of RHOA and phosphorylation of ERBB2 at 'Tyr-1248'. Required for normal brain development, axon guidance and cell migration. Probable signaling receptor which may play a role in myogenic differentiation through activation of the stress-activated MAPK cascade. This chain is Semaphorin-4C (Sema4c), found in Mus musculus (Mouse).